Here is a 218-residue protein sequence, read N- to C-terminus: Imidazole glycerol phosphate synthase subunit HisH (218 aa).

The region spanning 7–211 is the Glutamine amidotransferase type-1 domain; sequence STVIIDTGCA…LALDKASLDA (205 aa). Cysteine 82 (nucleophile) is an active-site residue. Catalysis depends on residues histidine 186 and glutamate 188.

As to quaternary structure, heterodimer of HisH and HisF.

It localises to the cytoplasm. The enzyme catalyses 5-[(5-phospho-1-deoxy-D-ribulos-1-ylimino)methylamino]-1-(5-phospho-beta-D-ribosyl)imidazole-4-carboxamide + L-glutamine = D-erythro-1-(imidazol-4-yl)glycerol 3-phosphate + 5-amino-1-(5-phospho-beta-D-ribosyl)imidazole-4-carboxamide + L-glutamate + H(+). It catalyses the reaction L-glutamine + H2O = L-glutamate + NH4(+). Its pathway is amino-acid biosynthesis; L-histidine biosynthesis; L-histidine from 5-phospho-alpha-D-ribose 1-diphosphate: step 5/9. Its function is as follows. IGPS catalyzes the conversion of PRFAR and glutamine to IGP, AICAR and glutamate. The HisH subunit catalyzes the hydrolysis of glutamine to glutamate and ammonia as part of the synthesis of IGP and AICAR. The resulting ammonia molecule is channeled to the active site of HisF. This is Imidazole glycerol phosphate synthase subunit HisH from Shewanella sediminis (strain HAW-EB3).